The primary structure comprises 35 residues: Sperm protamine alpha isoform 1 (35 aa).

Positions 1 to 35 are disordered; the sequence is MPRRRRRASRPVRRRRRARRSTAVRRRRRVVRRRR. Residues S9 and S21 each carry the phosphoserine modification.

In terms of processing, phosphorylated in immature sperm. Dephosphorylated in mature sperm allowing a stronger interaction with DNA. Gonads.

It localises to the nucleus. It is found in the chromosome. Protamines substitute for histones in the chromatin of sperm during the haploid phase of spermatogenesis. They compact sperm DNA into a highly condensed, stable and inactive complex. In Scomber scombrus (Atlantic mackerel), this protein is Sperm protamine alpha isoform 1.